We begin with the raw amino-acid sequence, 400 residues long: Malonyl CoA-acyl carrier protein transacylase (400 aa).

Catalysis depends on residues Ser92 and His201.

This sequence belongs to the FabD family.

It carries out the reaction holo-[ACP] + malonyl-CoA = malonyl-[ACP] + CoA. In terms of biological role, is involved in the mycosubtilin synthetase assembly, by catalyzing the transfer of malonyl groups to a specific acyl-carrier-protein domain on MycA. This Bacillus subtilis protein is Malonyl CoA-acyl carrier protein transacylase (fenF).